A 141-amino-acid chain; its full sequence is Galactose-6-phosphate isomerase subunit LacA (141 aa).

The protein belongs to the LacAB/RpiB family. As to quaternary structure, heteromultimeric protein consisting of LacA and LacB.

The enzyme catalyses aldehydo-D-galactose 6-phosphate = keto-D-tagatose 6-phosphate. It functions in the pathway carbohydrate metabolism; D-galactose 6-phosphate degradation; D-tagatose 6-phosphate from D-galactose 6-phosphate: step 1/1. This chain is Galactose-6-phosphate isomerase subunit LacA, found in Streptococcus equi subsp. equi (strain 4047).